Here is a 327-residue protein sequence, read N- to C-terminus: Leucotoxin LukD (327 aa).

The N-terminal stretch at Met1–Ala26 is a signal peptide.

It belongs to the aerolysin family. In terms of assembly, toxicity requires sequential binding and synergistic association of a class S and a class F component which form heterooligomeric complexes. LukE (class S) associates with LukD (class F). LukD can also associate with HlgA.

It is found in the secreted. Functionally, part of a bi-component leucotoxin that acts by forming pores in the membrane of the target cells. LukE-LukD is as effective as the Panton-Valentine leucocidin (PVL) for inducing dermonecrosis when injected in the rabbit skin, but not hemolytic and poorly leucotoxic on human blood cells compared to other leucotoxins expressed by S.aureus. HlgA-LukD is a Ca(2+) channel inducer. This is Leucotoxin LukD (lukD) from Staphylococcus aureus.